The sequence spans 429 residues: MDNNNACVLVDGHSAELKLRSSTIGPNVLGIGSLYEQTKMFTYDPGFTSTASCESSITFIDGDEGVLLHRGYPIEQLAEHGDFLEVCYLLLYGELPTAAQKKDFDYRVVHHTMVHEQMSRFFTGFRRDAHPMAVMCGCVGALSAFYHDSTDITDPHQRMVASLRMIAKMPTLAAMAYKYHIGQPFVYPKNDLDYASNFLRMCFAVPCEEYVVNPVLARAMDRIFILHADHEQNASTSTVRLAGSSGANPFACIAAGIACLWGPAHGGANERALNMLTEIGTVDRIPEYIARAKDKNDPFRLMGFGHRVYKNYDPRAKIMQKTAHEVLGELGIKDDPLLDIAIELERIALTDDYFIEKKLYPNVDFYSGITLKALGFPTTMFTVLFALARTVGWIAQWNEMIEDPDQRIGRPRQLYTGAPLREYVPLSKR.

Active-site residues include His-306 and Asp-364.

Belongs to the citrate synthase family.

It carries out the reaction oxaloacetate + acetyl-CoA + H2O = citrate + CoA + H(+). It participates in carbohydrate metabolism; tricarboxylic acid cycle; isocitrate from oxaloacetate: step 1/2. The exact function of the plasmid-encoded citrate synthase is not clear, it could help nodulation by allowing the bacteria to use citrate as a chelator of iron and calcium. In Rhizobium tropici, this protein is Citrate synthase, plasmid (pcsA).